We begin with the raw amino-acid sequence, 188 residues long: Non-structural protein NS2 (188 aa).

Interacts with host SNRPN. Interacts with host XPO1.

The protein localises to the host nucleus. In terms of biological role, plays an essential role in viral protein synthesis. Plays also a role in active nuclear export of mature particles before host cell lysis, by interacting with host XPO1. In Mus musculus (Mouse), this protein is Non-structural protein NS2 (NS2).